A 327-amino-acid chain; its full sequence is AA9 family lytic polysaccharide monooxygenase G (327 aa).

Positions 1-20 (MKLNLASLCFLASIAPLVSG) are cleaved as a signal peptide. Cu(2+)-binding residues include histidine 21 and histidine 96. Cysteine 62 and cysteine 185 are disulfide-bonded. Residue histidine 172 participates in O2 binding. A Cu(2+)-binding site is contributed by tyrosine 182. Asparagine 290 is a glycosylation site (N-linked (GlcNAc...) asparagine). In terms of domain architecture, CBM1 spans 291–327 (GTIKKYYQCGGQGWTGSGSCEAGTSCREWNTWYFQCV).

This sequence belongs to the polysaccharide monooxygenase AA9 family. Cu(2+) is required as a cofactor.

It is found in the secreted. It carries out the reaction [(1-&gt;4)-beta-D-glucosyl]n+m + reduced acceptor + O2 = 4-dehydro-beta-D-glucosyl-[(1-&gt;4)-beta-D-glucosyl]n-1 + [(1-&gt;4)-beta-D-glucosyl]m + acceptor + H2O.. Its function is as follows. Lytic polysaccharide monooxygenase (LPMO) that depolymerizes crystalline and amorphous polysaccharides via the oxidation of scissile alpha- or beta-(1-4)-glycosidic bonds, yielding C1 or C4 oxidation products. Catalysis by LPMOs requires the reduction of the active-site copper from Cu(II) to Cu(I) by a reducing agent and H(2)O(2) or O(2) as a cosubstrate. In Aspergillus tamarii, this protein is AA9 family lytic polysaccharide monooxygenase G.